Here is a 451-residue protein sequence, read N- to C-terminus: Multidrug export protein MepA (451 aa).

12 helical membrane passes run 26 to 46 (MIGT…IGFL), 54 to 74 (AISL…LFGV), 97 to 117 (SFSI…ALPF), 139 to 159 (LKVM…EQFA), 170 to 190 (IGML…IFGF), 194 to 214 (VVGA…FFII), 245 to 265 (IPAF…NLFL), 282 to 302 (LVQF…PLIA), 318 to 338 (AVIM…FTIG), 355 to 375 (ATFI…GFLF), 397 to 417 (VVII…GVIW), and 418 to 438 (SLLI…YLLR).

This sequence belongs to the multi antimicrobial extrusion (MATE) (TC 2.A.66.1) family. MepA subfamily.

The protein resides in the cell membrane. Multidrug resistance efflux protein. The sequence is that of Multidrug export protein MepA (mepA) from Staphylococcus aureus (strain MRSA252).